We begin with the raw amino-acid sequence, 400 residues long: CCA-adding enzyme (400 aa).

Residues glycine 28 and arginine 31 each contribute to the ATP site. The CTP site is built by glycine 28 and arginine 31. Aspartate 41 and aspartate 43 together coordinate Mg(2+). Residues arginine 112, aspartate 155, arginine 158, arginine 161, and arginine 164 each contribute to the ATP site. Residues arginine 112, aspartate 155, arginine 158, arginine 161, and arginine 164 each coordinate CTP.

It belongs to the tRNA nucleotidyltransferase/poly(A) polymerase family. Bacterial CCA-adding enzyme type 3 subfamily. Homodimer. Mg(2+) is required as a cofactor.

It catalyses the reaction a tRNA precursor + 2 CTP + ATP = a tRNA with a 3' CCA end + 3 diphosphate. The enzyme catalyses a tRNA with a 3' CCA end + 2 CTP + ATP = a tRNA with a 3' CCACCA end + 3 diphosphate. Functionally, catalyzes the addition and repair of the essential 3'-terminal CCA sequence in tRNAs without using a nucleic acid template. Adds these three nucleotides in the order of C, C, and A to the tRNA nucleotide-73, using CTP and ATP as substrates and producing inorganic pyrophosphate. tRNA 3'-terminal CCA addition is required both for tRNA processing and repair. Also involved in tRNA surveillance by mediating tandem CCA addition to generate a CCACCA at the 3' terminus of unstable tRNAs. While stable tRNAs receive only 3'-terminal CCA, unstable tRNAs are marked with CCACCA and rapidly degraded. The chain is CCA-adding enzyme from Staphylococcus haemolyticus (strain JCSC1435).